A 302-amino-acid polypeptide reads, in one-letter code: S-crystallin SL4 (302 aa).

A run of 3 repeats spans residues 45 to 54 (GGYAVQSRGD), 55 to 64 (GGYYVKSRGD), and 65 to 74 (GGYPVQGRGD). Residues 45 to 84 (GGYAVQSRGDGGYYVKSRGDGGYPVQGRGDTGYSSQTRSD) form a 4 X approximate tandem repeats of G-G-Y-[AYP]-V-[QK]-[SG]-R-G-D region. 3 consecutive short sequence motifs (cell attachment site) follow at residues 52-54 (RGD), 62-64 (RGD), and 72-74 (RGD). The disordered stretch occupies residues 68 to 92 (PVQGRGDTGYSSQTRSDDACLGQGR). The 4; approximate repeat unit spans residues 75-84 (TGYSSQTRSD). Positions 113-115 (RGD) match the Cell attachment site motif. Residues 118 to 205 (SDINSGLYSG…ESASRRSRNH (88 aa)) form a disordered region. Composition is skewed to basic and acidic residues over residues 129–166 (RMDD…HYRS) and 177–192 (AEDR…RIDI). Positions 183-302 (GHSDSHRIDI…YIKRRYQSDF (120 aa)) constitute a GST C-terminal domain.

This sequence belongs to the GST superfamily.

In terms of biological role, S-crystallins are structural components of squids and octopi eye lens. The sequence is that of S-crystallin SL4 from Nototodarus sloanii (Wellington flying squid).